The following is a 349-amino-acid chain: tRNA N6-adenosine threonylcarbamoyltransferase (349 aa).

Residues histidine 116 and histidine 120 each contribute to the Fe cation site. Residues 139–143 (LVSGG), aspartate 172, glycine 185, and asparagine 283 each bind substrate. Residue aspartate 311 participates in Fe cation binding.

Belongs to the KAE1 / TsaD family. Fe(2+) serves as cofactor.

Its subcellular location is the cytoplasm. It carries out the reaction L-threonylcarbamoyladenylate + adenosine(37) in tRNA = N(6)-L-threonylcarbamoyladenosine(37) in tRNA + AMP + H(+). Functionally, required for the formation of a threonylcarbamoyl group on adenosine at position 37 (t(6)A37) in tRNAs that read codons beginning with adenine. Is involved in the transfer of the threonylcarbamoyl moiety of threonylcarbamoyl-AMP (TC-AMP) to the N6 group of A37, together with TsaE and TsaB. TsaD likely plays a direct catalytic role in this reaction. This chain is tRNA N6-adenosine threonylcarbamoyltransferase, found in Colwellia psychrerythraea (strain 34H / ATCC BAA-681) (Vibrio psychroerythus).